The following is a 120-amino-acid chain: Large ribosomal subunit protein uL18 (120 aa).

This sequence belongs to the universal ribosomal protein uL18 family. As to quaternary structure, part of the 50S ribosomal subunit; part of the 5S rRNA/L5/L18/L25 subcomplex. Contacts the 5S and 23S rRNAs.

Functionally, this is one of the proteins that bind and probably mediate the attachment of the 5S RNA into the large ribosomal subunit, where it forms part of the central protuberance. The polypeptide is Large ribosomal subunit protein uL18 (Brucella suis biovar 1 (strain 1330)).